A 632-amino-acid chain; its full sequence is tRNA uridine 5-carboxymethylaminomethyl modification enzyme MnmG (632 aa).

Position 13–18 (13–18 (GGGHAG)) interacts with FAD. 274-288 (GPRYCPSIEDKVMRF) contributes to the NAD(+) binding site.

The protein belongs to the MnmG family. Homodimer. Heterotetramer of two MnmE and two MnmG subunits. FAD is required as a cofactor.

It is found in the cytoplasm. NAD-binding protein involved in the addition of a carboxymethylaminomethyl (cmnm) group at the wobble position (U34) of certain tRNAs, forming tRNA-cmnm(5)s(2)U34. In Dichelobacter nodosus (strain VCS1703A), this protein is tRNA uridine 5-carboxymethylaminomethyl modification enzyme MnmG.